We begin with the raw amino-acid sequence, 719 residues long: Translation factor guf1, mitochondrial (719 aa).

A mitochondrion-targeting transit peptide spans 1-75 (MRGALCRPDV…TRCFSALRSL (75 aa)). The tr-type G domain maps to 119–301 (ERYRNFCIVA…AVISNVPAPV (183 aa)). GTP-binding positions include 128 to 135 (AHIDHGKS), 194 to 198 (DTPGH), and 248 to 251 (NKID).

It belongs to the TRAFAC class translation factor GTPase superfamily. Classic translation factor GTPase family. LepA subfamily.

The protein resides in the mitochondrion inner membrane. It catalyses the reaction GTP + H2O = GDP + phosphate + H(+). In terms of biological role, promotes mitochondrial protein synthesis. May act as a fidelity factor of the translation reaction, by catalyzing a one-codon backward translocation of tRNAs on improperly translocated ribosomes. Binds to mitochondrial ribosomes in a GTP-dependent manner. The chain is Translation factor guf1, mitochondrial (guf1) from Neurospora crassa (strain ATCC 24698 / 74-OR23-1A / CBS 708.71 / DSM 1257 / FGSC 987).